The following is a 392-amino-acid chain: L-rhamnonate dehydratase (392 aa).

Positions 22 and 48 each coordinate substrate. Residues D214, E240, and E268 each coordinate Mg(2+). The active-site Proton acceptor is H318. E338 provides a ligand contact to substrate.

It belongs to the mandelate racemase/muconate lactonizing enzyme family. RhamD subfamily. Homooctamer; tetramer of dimers. Mg(2+) is required as a cofactor.

The enzyme catalyses L-rhamnonate = 2-dehydro-3-deoxy-L-rhamnonate + H2O. Functionally, catalyzes the dehydration of L-rhamnonate to 2-keto-3-deoxy-L-rhamnonate (KDR). This is L-rhamnonate dehydratase from Paraburkholderia phymatum (strain DSM 17167 / CIP 108236 / LMG 21445 / STM815) (Burkholderia phymatum).